The sequence spans 397 residues: Transcription factor xenB (397 aa).

A disordered region spans residues 220–249 (TISDFETGDRQTISRSDTNSEVRPIPESPS). Over residues 229–240 (RQTISRSDTNSE) the composition is skewed to polar residues.

Its function is as follows. Transcription factor; part of the gene cluster that mediates the biosynthesis of xenoacremones such as xenoacremone A, a compound that shows inhibitory activity toward the PI3K/AKT signaling pathway and which has the ability to induce apoptosis of A549 lung cancer cells. Acts as a positive regulator of the xenoacremones biosynthesis gene cluster. This chain is Transcription factor xenB, found in Xenoacremonium sinensis (Endophyte fungus).